Consider the following 428-residue polypeptide: Adenylosuccinate synthetase (428 aa).

GTP contacts are provided by residues 12–18 (GDEGKGK) and 40–42 (GHT). Residue aspartate 13 is the Proton acceptor of the active site. Aspartate 13 and glycine 40 together coordinate Mg(2+). Residues 13 to 16 (DEGK), 38 to 41 (NAGH), threonine 129, arginine 143, glutamine 224, threonine 239, and arginine 303 contribute to the IMP site. Histidine 41 functions as the Proton donor in the catalytic mechanism. 299–305 (VTTGRIR) contacts substrate. GTP is bound by residues arginine 305, 331–333 (KVD), and 410–412 (AYG).

Belongs to the adenylosuccinate synthetase family. Homodimer. Mg(2+) serves as cofactor.

Its subcellular location is the cytoplasm. The enzyme catalyses IMP + L-aspartate + GTP = N(6)-(1,2-dicarboxyethyl)-AMP + GDP + phosphate + 2 H(+). The protein operates within purine metabolism; AMP biosynthesis via de novo pathway; AMP from IMP: step 1/2. Its function is as follows. Plays an important role in the de novo pathway of purine nucleotide biosynthesis. Catalyzes the first committed step in the biosynthesis of AMP from IMP. The chain is Adenylosuccinate synthetase from Francisella tularensis subsp. holarctica (strain FTNF002-00 / FTA).